We begin with the raw amino-acid sequence, 206 residues long: MRKLKKEQREALEKVVSLGICNDFYLAGGTALLIRYGHRFSDDFDFFTFPEKPFDSFSISRQIDKLSRVRWLYQSKDTLIFLLDGIKFSFFEYRYPLLENPEKNNDLGIFIAGDKDIACMKAVAIAQRGSKKDFYDLWFLMRKHGWDLKELEKLVKKKYRNIDFSIIVKSLVYFEDAREEVYEDIEPYWEEVEEFFKRKVKEYLEN.

This is an uncharacterized protein from Aquifex aeolicus (strain VF5).